A 642-amino-acid polypeptide reads, in one-letter code: Phosphomethylpyrimidine synthase (642 aa).

Residues Asn-235, Met-264, Tyr-293, His-329, 349-351 (SRG), 390-393 (DGLR), and Glu-429 contribute to the substrate site. His-433 contacts Zn(2+). Tyr-456 serves as a coordination point for substrate. His-497 serves as a coordination point for Zn(2+). 3 residues coordinate [4Fe-4S] cluster: Cys-577, Cys-580, and Cys-585.

This sequence belongs to the ThiC family. As to quaternary structure, homodimer. Requires [4Fe-4S] cluster as cofactor.

It carries out the reaction 5-amino-1-(5-phospho-beta-D-ribosyl)imidazole + S-adenosyl-L-methionine = 4-amino-2-methyl-5-(phosphooxymethyl)pyrimidine + CO + 5'-deoxyadenosine + formate + L-methionine + 3 H(+). Its pathway is cofactor biosynthesis; thiamine diphosphate biosynthesis. Its function is as follows. Catalyzes the synthesis of the hydroxymethylpyrimidine phosphate (HMP-P) moiety of thiamine from aminoimidazole ribotide (AIR) in a radical S-adenosyl-L-methionine (SAM)-dependent reaction. The protein is Phosphomethylpyrimidine synthase of Alteromonas mediterranea (strain DSM 17117 / CIP 110805 / LMG 28347 / Deep ecotype).